A 387-amino-acid chain; its full sequence is Limonene 1,2-monooxygenase (387 aa).

It belongs to the bacterial luciferase oxidoreductase family. FAD is required as a cofactor.

The enzyme catalyses (4S)-limonene + NADPH + O2 + H(+) = limonene 1,2-epoxide + NADP(+) + H2O. It carries out the reaction (4S)-limonene + NADH + O2 + H(+) = limonene 1,2-epoxide + NAD(+) + H2O. The catalysed reaction is (4R)-limonene + NADH + O2 + H(+) = limonene 1,2-epoxide + NAD(+) + H2O. It catalyses the reaction (4R)-limonene + NADPH + O2 + H(+) = limonene 1,2-epoxide + NADP(+) + H2O. It functions in the pathway terpene metabolism; (4R)-limonene degradation; (1S,4R)-1-hydroxylimonen-2-one from (4R)-limonene: step 1/3. Acts on both enantiomers of limonene by their NAD-dependent epoxidation at the 1,2 double bond forming limonene-1,2-epoxide. The sequence is that of Limonene 1,2-monooxygenase (limB) from Rhodococcus erythropolis (Arthrobacter picolinophilus).